An 88-amino-acid polypeptide reads, in one-letter code: Large ribosomal subunit protein bL31B (88 aa).

It belongs to the bacterial ribosomal protein bL31 family. Type B subfamily. In terms of assembly, part of the 50S ribosomal subunit.

This Janthinobacterium sp. (strain Marseille) (Minibacterium massiliensis) protein is Large ribosomal subunit protein bL31B.